The primary structure comprises 320 residues: GMP reductase (320 aa).

The active-site Thioimidate intermediate is C174. 203-226 (IIADGGLRVHGDIAKSIRMGASFC) contributes to the NADP(+) binding site.

Belongs to the IMPDH/GMPR family. GuaC type 2 subfamily.

It catalyses the reaction IMP + NH4(+) + NADP(+) = GMP + NADPH + 2 H(+). Its function is as follows. Catalyzes the irreversible NADPH-dependent deamination of GMP to IMP. It functions in the conversion of nucleobase, nucleoside and nucleotide derivatives of G to A nucleotides, and in maintaining the intracellular balance of A and G nucleotides. The polypeptide is GMP reductase (Mycoplasma mycoides subsp. mycoides SC (strain CCUG 32753 / NCTC 10114 / PG1)).